The primary structure comprises 213 residues: Cysteine dioxygenase (213 aa).

Residues histidine 100, histidine 102, and histidine 160 each contribute to the Fe cation site. Residues 107-177 constitute a cross-link (3'-(S-cysteinyl)-tyrosine (Cys-Tyr)); that stretch reads CVMKVLKGSL…TNFAISLHLY (71 aa).

It belongs to the cysteine dioxygenase family. Fe cation is required as a cofactor. In terms of processing, the thioether cross-link between Cys-107 and Tyr-177 plays a structural role through stabilizing the Fe(2+) ion, and prevents the production of highly damaging free hydroxyl radicals by holding the oxygen radical via hydroxyl hydrogen.

The catalysed reaction is L-cysteine + O2 = 3-sulfino-L-alanine + H(+). This Ajellomyces capsulatus (strain G186AR / H82 / ATCC MYA-2454 / RMSCC 2432) (Darling's disease fungus) protein is Cysteine dioxygenase (CDO1).